Consider the following 241-residue polypeptide: Accessory protein p30II (241 aa).

2 consecutive short sequence motifs (nuclear localization signal) follow at residues 73 to 78 (RRCRSR) and 91 to 98 (GPRRSRPR). The disordered stretch occupies residues 86–153 (AFPPGGPRRS…HRNSPTDTKL (68 aa)). Residues 107 to 138 (PSSTVSSSSLSFNSSSKDNSPSTNSSTSRSSG) show a composition bias toward low complexity. Residues 175–184 (LRVWRLCTRR) carry the Mitochondrial targeting signal motif.

It belongs to the HTLV-1 accessory protein p30II family. In terms of assembly, p30II binds to the KIX domains of CREBBP and EP300.

The protein localises to the host nucleus. Its subcellular location is the host nucleolus. The protein resides in the host mitochondrion inner membrane. Its function is as follows. p30II is a multifunctional regulator that sequesters EP300/CREBBP and down-regulates CREB-responsive element (CRE) and Tax-responsive element (TRE) mediated transcription. Specifically binds and represses tax/rex mRNA nuclear export. Since Tax and Rex are positive regulators of viral gene expression, their inhibition by p30II reduces virion production, and allows the virus to escape the host immune surveillance and persist latently in an immune-competent host. P13II increases mitochondrial permeability to monovalent cations, producing a rapid, membrane potential-dependent influx of potassium. This could involve a channel-forming activity. Interferes with cell proliferation and transformation and promotes apoptosis induced by ceramide and Fas ligand, probably using the Ras signaling. This chain is Accessory protein p30II, found in Human T-cell leukemia virus 1 (isolate Caribbea HS-35 subtype A) (HTLV-1).